We begin with the raw amino-acid sequence, 520 residues long: Poly(A)-specific ribonuclease PNLDC1 (520 aa).

Positions 17, 19, 260, and 354 each coordinate Mg(2+). The chain crosses the membrane as a helical span at residues 497-513 (CLLQVCGIVTAWALLAF).

Belongs to the CAF1 family. The cofactor is Mg(2+).

The protein resides in the endoplasmic reticulum membrane. The catalysed reaction is Exonucleolytic cleavage of poly(A) to 5'-AMP.. Its function is as follows. 3'-exoribonuclease that has a preference for poly(A) tails of mRNAs, thereby efficiently degrading poly(A) tails. Exonucleolytic degradation of the poly(A) tail is often the first step in the decay of eukaryotic mRNAs and is also used to silence certain maternal mRNAs translationally during oocyte maturation and early embryonic development. May act as a regulator of multipotency in embryonic stem cells. Is a critical factor for proper spermatogenesis, involved in pre-piRNAs processing to generate mature piRNAs. In Pongo abelii (Sumatran orangutan), this protein is Poly(A)-specific ribonuclease PNLDC1.